A 306-amino-acid chain; its full sequence is D-alanine--D-alanine ligase B (306 aa).

Catalysis depends on residues E15 and S150. The 203-residue stretch at 101 to 303 (KLLWQGAGLP…FSQLVVRILE (203 aa)) folds into the ATP-grasp domain. 134 to 189 (ISSLGLPVIVKPSREGSSVGMSKVVAENALQDALRLAFQHDEEVLIEKWLSGPEFT) contacts ATP. Positions 257, 270, and 272 each coordinate Mg(2+). S281 is an active-site residue.

The protein belongs to the D-alanine--D-alanine ligase family. In terms of assembly, monomer. The cofactor is Mg(2+). Mn(2+) serves as cofactor.

The protein resides in the cytoplasm. The enzyme catalyses 2 D-alanine + ATP = D-alanyl-D-alanine + ADP + phosphate + H(+). It functions in the pathway cell wall biogenesis; peptidoglycan biosynthesis. Its function is as follows. Cell wall formation. In Escherichia coli O6:H1 (strain CFT073 / ATCC 700928 / UPEC), this protein is D-alanine--D-alanine ligase B.